Reading from the N-terminus, the 194-residue chain is RNA polymerase II subunit A C-terminal domain phosphatase SSU72 like protein 3 (194 aa).

It belongs to the SSU72 phosphatase family.

Its subcellular location is the nucleus. It catalyses the reaction O-phospho-L-seryl-[protein] + H2O = L-seryl-[protein] + phosphate. The catalysed reaction is O-phospho-L-threonyl-[protein] + H2O = L-threonyl-[protein] + phosphate. Protein phosphatase that catalyzes the dephosphorylation of the C-terminal domain of RNA polymerase II. Plays a role in RNA processing and termination. This chain is RNA polymerase II subunit A C-terminal domain phosphatase SSU72 like protein 3, found in Homo sapiens (Human).